The sequence spans 409 residues: Peptidase T (409 aa).

His-80 lines the Zn(2+) pocket. Asp-82 is a catalytic residue. Asp-143 contacts Zn(2+). The Proton acceptor role is filled by Glu-177. 3 residues coordinate Zn(2+): Glu-178, Asp-200, and His-382.

The protein belongs to the peptidase M20B family. Zn(2+) serves as cofactor.

It localises to the cytoplasm. The catalysed reaction is Release of the N-terminal residue from a tripeptide.. Its function is as follows. Cleaves the N-terminal amino acid of tripeptides. This is Peptidase T from Alkaliphilus oremlandii (strain OhILAs) (Clostridium oremlandii (strain OhILAs)).